A 923-amino-acid polypeptide reads, in one-letter code: MHCGLVLILFTGIFLIVSALKNDKCGDNIRITSANYLTSPGYPVSYYPSQKCIWVITAPGPNQRILINFNPHFDLEDRECKYDYVEVRDGVDENGQLVGKYCGKIAPSPVVSSGNQLFIKFVSDYETHGAGFSIRYEIFKTGPECSRNFTSSSGVIKSPGFPEKYPNNLDCTFMIFAPKMSEIVLEFESFELEPDTQPPAGVFCRYDRLEIWDGFPGVGPYIGRYCGQNTPGRIISYTGTLAMTINTDSAIAKEGFSANFTVLERTVPDDFDCTEPLGMETGEIHSDQIMASSQYSNSWSAERSRLNNPENGWTPLKDTNKEWIQVDLGFLRFVSAIGTQGAISQETKKKYYVKEYKVDVSSNGEDWITIKDGPKQKLFQGNTNPTDVVKAKFPKPTLTRYLRIRPINWETGIALRFEVYGCKISEYPCSGMLGMVSGLITDSQITVSSHIERTWVSENARLLTSRSGWMLLPQSQPYADEWLQIDLAEEKLVKGLIIQGGKHRDNKVFMKKFRLGYSNNGSDWKLVMDATGNKPKIFEGNLNYDTPALRTMEPVLTRFVRIYPDRGTPAGMGLRLELLGCEMEVPTVPPTTPAASTTPSDECDDDQANCHSGTGDGYDQTGGTTATETIREMSTIPAFLWFACDFGWANDPSFCGWISEDSGFRWQIQSSGTPTLNTGPNMDHTGGSGNFIYTLATGAQETEVARLVSPSVSGQDSDLCLSFWYHMFGSHIGTLHIKQRRETSQGSADVLLWTVSGHQGNRWREGRVLIPHSNKPYQVIIESVVERKSWGDIAVDDIKILDNVNMADCKDPDVPAEPIQPEDNFNEIMVDITDFPDIVENPDIGGAGNMLKTLDPILITIIAMSALGVFLGAICGVVLYCACSHSGMSDRNLSALENYNFELVDGVKLKKDKLNSQNSYSEA.

A signal peptide spans 1–19 (MHCGLVLILFTGIFLIVSA). Residues 20 to 856 (LKNDKCGDNI…AGNMLKTLDP (837 aa)) lie on the Extracellular side of the membrane. 3 disulfides stabilise this stretch: Cys25/Cys52, Cys80/Cys102, and Cys145/Cys171. CUB domains are found at residues 25–139 (CGDN…YEIF) and 145–263 (CSRN…FTVL). Residue Asn148 is glycosylated (N-linked (GlcNAc...) asparagine). Residues Glu193, Asp207, and Asp248 each coordinate Ca(2+). The cysteines at positions 204 and 226 are disulfide-linked. Asn259 is a glycosylation site (N-linked (GlcNAc...) asparagine). 2 cysteine pairs are disulfide-bonded: Cys273–Cys422 and Cys429–Cys581. F5/8 type C domains follow at residues 273 to 422 (CTEP…VYGC) and 429 to 581 (CSGM…LLGC). A glycan (N-linked (GlcNAc...) asparagine) is linked at Asn520. The segment at 587–624 (TVPPTTPAASTTPSDECDDDQANCHSGTGDGYDQTGGT) is disordered. An O-linked (Xyl...) (chondroitin sulfate) serine; alternate glycan is attached at Ser612. The O-linked (Xyl...) (heparan sulfate) serine; alternate glycan is linked to Ser612. Residues 642–811 (FACDFGWAND…DNVNMADCKD (170 aa)) form the MAM domain. A helical membrane pass occupies residues 857 to 877 (ILITIIAMSALGVFLGAICGV). The Cytoplasmic segment spans residues 878 to 923 (VLYCACSHSGMSDRNLSALENYNFELVDGVKLKKDKLNSQNSYSEA).

Belongs to the neuropilin family.

The protein localises to the membrane. In terms of biological role, receptor involved in the development of the cardiovascular system, in angiogenesis, in the formation of certain neuronal circuits and in organogenesis outside the nervous system. It mediates the chemorepulsant activity of semaphorins. Regulates angiogenesis through a VEGF-dependent pathway. This chain is Neuropilin-1a (nrp1a), found in Danio rerio (Zebrafish).